Here is a 600-residue protein sequence, read N- to C-terminus: MRVTTSFPLGTLRDTPSEAEIISHQLLLQAGYIRRVNSGIYAYMPIMLRVIEKISAIIERELNSIGCTKLLLPQLHPADLWRKSERWEGYTAGEGIMFNLKDRQGKEFGLAPTHEEVITSIASETINSYKQLPQCFYQIQTKFRDEIRPRFGLMRSREFIMKDGYSFHSSEKDLASFYEKVGNAYENIFKSCGLETVGVEADSGAIGGASSKEFMVTADAGEDSILFTKSGSYAANIEKAVSLPSQPIPIKDNIAEWLETPHQKTILEVCDNNNLDPSQIIKVVIFLAQFEGEFEVPILACIRGDQHINEVKLFNLINKLHNFNLINLQKIEDKNTIEKNLVDFPLGFIGPDLDNKTIKASSNWVKKWTRIIDPSASELSKFISGGNKVNFHKLFQEFSFASKDYLIGDIRNAKKGDKISIANDEELKEKKGIEIGHIFQLGQKYSEKLNAKFSDKDGTLKNLWMGCYGIGVTRIAQAAIEQNHDQKGICWPIQISPFEVIIIPTNLKDPIQSELTEQIYNNFLINKIDVLLDDRNDRAGVKFKDAELIGIPFQIIIGRDSVNKEVELLSRTNNTKFKISTDKLLETFISESEIMYNKNS.

This sequence belongs to the class-II aminoacyl-tRNA synthetase family. ProS type 1 subfamily. In terms of assembly, homodimer.

The protein localises to the cytoplasm. The catalysed reaction is tRNA(Pro) + L-proline + ATP = L-prolyl-tRNA(Pro) + AMP + diphosphate. Its function is as follows. Catalyzes the attachment of proline to tRNA(Pro) in a two-step reaction: proline is first activated by ATP to form Pro-AMP and then transferred to the acceptor end of tRNA(Pro). As ProRS can inadvertently accommodate and process non-cognate amino acids such as alanine and cysteine, to avoid such errors it has two additional distinct editing activities against alanine. One activity is designated as 'pretransfer' editing and involves the tRNA(Pro)-independent hydrolysis of activated Ala-AMP. The other activity is designated 'posttransfer' editing and involves deacylation of mischarged Ala-tRNA(Pro). The misacylated Cys-tRNA(Pro) is not edited by ProRS. The chain is Proline--tRNA ligase from Prochlorococcus marinus (strain MIT 9215).